A 328-amino-acid chain; its full sequence is Reticulocalbin-3 (328 aa).

Positions 1–20 are cleaved as a signal peptide; the sequence is MMWRWSFLLLLLLLRHWALG. A disordered region spans residues 24-48; sequence PDAGPHGQDRVHHGTPLSEAPHDDA. EF-hand domains are found at residues 77-112, 113-148, 163-198, 200-235, 241-276, and 277-312; these read QARL…TQQR, HIRD…HYEP, KMLA…EEFP, MRDI…EEPG, WVQT…PSQD, and QPLV…FVGS. Positions 92, 94, 96, 101, 126, 128, 130, 132, and 137 each coordinate Ca(2+). An N-linked (GlcNAc...) asparagine glycan is attached at Asn140. Ca(2+)-binding residues include Asp176, Asp178, Asp180, Met182, Glu187, Asp213, Asn215, Asp217, Tyr219, Glu224, Asp254, Asn256, Asp258, Arg260, Glu265, Asp290, Asp292, Asp294, Arg296, and Glu301. The short motif at 325–328 is the Prevents secretion from ER element; the sequence is HDEL.

Belongs to the CREC family. As to quaternary structure, interacts with PCSK6 (immature form including the propeptide); probably involved in the maturation and the secretion of PCSK6. Post-translationally, degraded by PCSK6 and other endoproteases including FURIN and PCSK5. In terms of processing, N-glycosylated. As to expression, highly expressed in lung and heart. Also detected in liver, spleen, kidney, skeletal muscle, intestine, stomach, and brain.

The protein localises to the endoplasmic reticulum lumen. Probable molecular chaperone assisting protein biosynthesis and transport in the endoplasmic reticulum. Required for the proper biosynthesis and transport of pulmonary surfactant-associated protein A/SP-A, pulmonary surfactant-associated protein D/SP-D and the lipid transporter ABCA3. By regulating both the proper expression and the degradation through the endoplasmic reticulum-associated protein degradation pathway of these proteins plays a crucial role in pulmonary surfactant homeostasis. Has an anti-fibrotic activity by negatively regulating the secretion of type I and type III collagens. This calcium-binding protein also transiently associates with immature PCSK6 and regulates its secretion. In Mus musculus (Mouse), this protein is Reticulocalbin-3.